Reading from the N-terminus, the 944-residue chain is Protein translocase subunit SecA (944 aa).

ATP is bound by residues Q87, 105–109 (GEGKT), and D494. The segment at 894–944 (HAAAAGDGEEKPRPKQETVVRTQPKVGRNDPCPCGSGKKYKKCHGATEAAV) is disordered. Basic and acidic residues predominate over residues 901–911 (GEEKPRPKQET). Residues C925, C927, C936, and H937 each coordinate Zn(2+).

It belongs to the SecA family. As to quaternary structure, monomer and homodimer. Part of the essential Sec protein translocation apparatus which comprises SecA, SecYEG and auxiliary proteins SecDF-YajC and YidC. Zn(2+) serves as cofactor.

The protein localises to the cell inner membrane. It localises to the cytoplasm. It carries out the reaction ATP + H2O + cellular proteinSide 1 = ADP + phosphate + cellular proteinSide 2.. Its function is as follows. Part of the Sec protein translocase complex. Interacts with the SecYEG preprotein conducting channel. Has a central role in coupling the hydrolysis of ATP to the transfer of proteins into and across the cell membrane, serving as an ATP-driven molecular motor driving the stepwise translocation of polypeptide chains across the membrane. This Anaeromyxobacter sp. (strain Fw109-5) protein is Protein translocase subunit SecA.